The chain runs to 438 residues: UDP-N-acetylmuramoylalanine--D-glutamate ligase (438 aa).

ATP is bound at residue 112–118 (GSNGKST).

The protein belongs to the MurCDEF family. Mg(2+) serves as cofactor.

The protein resides in the cytoplasm. The enzyme catalyses UDP-N-acetyl-alpha-D-muramoyl-L-alanine + D-glutamate + ATP = UDP-N-acetyl-alpha-D-muramoyl-L-alanyl-D-glutamate + ADP + phosphate + H(+). Its pathway is cell wall biogenesis; peptidoglycan biosynthesis. Functionally, cell wall formation. Catalyzes the addition of glutamate to the nucleotide precursor UDP-N-acetylmuramoyl-L-alanine (UMA). The polypeptide is UDP-N-acetylmuramoylalanine--D-glutamate ligase (murD) (Escherichia coli (strain K12)).